A 210-amino-acid polypeptide reads, in one-letter code: Holliday junction resolvase RecU (210 aa).

Residues threonine 87, aspartate 89, glutamate 102, and glutamine 121 each coordinate Mg(2+).

Belongs to the RecU family. Mg(2+) is required as a cofactor.

It localises to the cytoplasm. The enzyme catalyses Endonucleolytic cleavage at a junction such as a reciprocal single-stranded crossover between two homologous DNA duplexes (Holliday junction).. In terms of biological role, endonuclease that resolves Holliday junction intermediates in genetic recombination. Cleaves mobile four-strand junctions by introducing symmetrical nicks in paired strands. Promotes annealing of linear ssDNA with homologous dsDNA. Required for DNA repair, homologous recombination and chromosome segregation. This chain is Holliday junction resolvase RecU, found in Lactobacillus delbrueckii subsp. bulgaricus (strain ATCC 11842 / DSM 20081 / BCRC 10696 / JCM 1002 / NBRC 13953 / NCIMB 11778 / NCTC 12712 / WDCM 00102 / Lb 14).